Consider the following 153-residue polypeptide: MLLRDLVLRRGCCWSSLLLHCALHPLWGFVQVTHGEPQKSCSKVTDSCRHVCQCRPPPPLPPPPPPPPPPRLLSAPAPNSTSCPTEESWWSGLVIIIAVCCASLVFLTVLVIICYKAIKRKPLRKDENGTSVAEYPMSASQSNKGVDVNNAVV.

Positions 1-35 are cleaved as a signal peptide; the sequence is MLLRDLVLRRGCCWSSLLLHCALHPLWGFVQVTHG. Residues 36-92 are Extracellular-facing; that stretch reads EPQKSCSKVTDSCRHVCQCRPPPPLPPPPPPPPPPRLLSAPAPNSTSCPTEESWWSG. A PRAD domain is found at 56–70; that stretch reads PPPPLPPPPPPPPPP. A compositionally biased stretch (pro residues) spans 59–71; that stretch reads PLPPPPPPPPPPR. Residues 59–79 are disordered; it reads PLPPPPPPPPPPRLLSAPAPN. Asparagine 79 carries an N-linked (GlcNAc...) asparagine glycan. Residues 93–113 traverse the membrane as a helical segment; the sequence is LVIIIAVCCASLVFLTVLVII. Residues 114-153 are Cytoplasmic-facing; sequence CYKAIKRKPLRKDENGTSVAEYPMSASQSNKGVDVNNAVV.

In terms of assembly, interacts with ACHE, probably through disulfide bonds.

The protein localises to the cell membrane. The protein resides in the cell junction. Its subcellular location is the synapse. Its function is as follows. Required to anchor acetylcholinesterase (ACHE) to the basal lamina of the neuromuscular junction and to the membrane of neuronal synapses in brain. Also able to organize ACHE into tetramers. The polypeptide is Proline-rich membrane anchor 1 (PRIMA1) (Homo sapiens (Human)).